We begin with the raw amino-acid sequence, 157 residues long: S-ribosylhomocysteine lyase (157 aa).

3 residues coordinate Fe cation: histidine 54, histidine 58, and cysteine 124.

This sequence belongs to the LuxS family. As to quaternary structure, homodimer. It depends on Fe cation as a cofactor.

It carries out the reaction S-(5-deoxy-D-ribos-5-yl)-L-homocysteine = (S)-4,5-dihydroxypentane-2,3-dione + L-homocysteine. In terms of biological role, involved in the synthesis of autoinducer 2 (AI-2) which is secreted by bacteria and is used to communicate both the cell density and the metabolic potential of the environment. The regulation of gene expression in response to changes in cell density is called quorum sensing. Catalyzes the transformation of S-ribosylhomocysteine (RHC) to homocysteine (HC) and 4,5-dihydroxy-2,3-pentadione (DPD). This Lactobacillus helveticus (strain DPC 4571) protein is S-ribosylhomocysteine lyase.